The chain runs to 1582 residues: Alpha-2-macroglobulin (1582 aa).

Positions 1 to 15 (MICLAALAVAVPARA) are cleaved as a signal peptide. Residues 1080-1083 (CAEQ) constitute a cross-link (isoglutamyl cysteine thioester (Cys-Gln)).

The protein belongs to the protease inhibitor I39 (alpha-2-macroglobulin) family. Bacterial alpha-2-macroglobulin subfamily.

In terms of biological role, protects the bacterial cell from host peptidases. This is Alpha-2-macroglobulin from Ralstonia nicotianae (strain ATCC BAA-1114 / GMI1000) (Ralstonia solanacearum).